The primary structure comprises 45 residues: Mu-conotoxin-like Cal 12.1.2g (45 aa).

4 disulfides stabilise this stretch: C3–C16, C11–C28, C18–C33, and C27–C39. P23 is modified (4-hydroxyproline). A 6'-bromotryptophan mark is found at W37 and W38. Position 40 is a 4-hydroxyproline (P40).

Expressed by the venom duct.

Its subcellular location is the secreted. In terms of biological role, mu-conotoxins block voltage-gated sodium channels. This toxin reversibly blocks voltage-gated sodium channel in cephalopods, with no alteration in the voltage dependence of sodium conductance or on the kinetics of inactivation. In Californiconus californicus (California cone), this protein is Mu-conotoxin-like Cal 12.1.2g.